The sequence spans 175 residues: Co-chaperone protein HscB homolog (175 aa).

A J domain is found at 7-79 (SHFDLFHLPA…LKRATYLLSL (73 aa)).

This sequence belongs to the HscB family. As to quaternary structure, interacts with HscA and stimulates its ATPase activity.

Co-chaperone involved in the maturation of iron-sulfur cluster-containing proteins. Seems to help targeting proteins to be folded toward HscA. The chain is Co-chaperone protein HscB homolog from Burkholderia multivorans (strain ATCC 17616 / 249).